Consider the following 699-residue polypeptide: Dymeclin (699 aa).

G2 is lipidated: N-myristoyl glycine. Residue S346 is modified to Phosphoserine.

The protein belongs to the dymeclin family.

This is Dymeclin from Drosophila melanogaster (Fruit fly).